The following is a 139-amino-acid chain: MAMTYHLDVVSAEQQMFSGLVEKIQVTGSEGELGIYPGHAPLLTAIKPGMIRIVKQHGHEEFIYLSGGILEVQPGNVTVLADTAIRGQDLDEARAMEAKRKAEEHISSSHGDVDYAQASAELAKAIAQLRVIELTKKAM.

Belongs to the ATPase epsilon chain family. As to quaternary structure, F-type ATPases have 2 components, CF(1) - the catalytic core - and CF(0) - the membrane proton channel. CF(1) has five subunits: alpha(3), beta(3), gamma(1), delta(1), epsilon(1). CF(0) has three main subunits: a, b and c.

The protein resides in the cell inner membrane. Functionally, produces ATP from ADP in the presence of a proton gradient across the membrane. The protein is ATP synthase epsilon chain of Escherichia coli O139:H28 (strain E24377A / ETEC).